The following is a 124-amino-acid chain: Large ribosomal subunit protein eL31 (124 aa).

This sequence belongs to the eukaryotic ribosomal protein eL31 family.

The protein is Large ribosomal subunit protein eL31 (RpL31) of Spodoptera frugiperda (Fall armyworm).